The chain runs to 367 residues: Carbamoyl-phosphate synthase (367 aa).

The 186-residue stretch at 111 to 296 folds into the ATP-grasp domain; it reads KEFYNEIGVP…SLCELVNMAA (186 aa). Residue 137 to 186 participates in ATP binding; it reads KMEFPVVLKQGQGQGGKDIKVAESLDDVKEYFEEFDHALCEKFIEGSEIS. Mg(2+) contacts are provided by Asp253, Glu267, and Asn269. The Mn(2+) site is built by Asp253, Glu267, and Asn269.

This sequence belongs to the small carbamoyl-phosphate synthase family. In terms of assembly, forms homodimers and homotetramers (dimers of dimers). It depends on Mg(2+) as a cofactor. Mn(2+) serves as cofactor.

The enzyme catalyses hydrogencarbonate + NH4(+) + 2 ATP = carbamoyl phosphate + 2 ADP + phosphate + 2 H(+). Functionally, catalyzes the synthesis of carbamoyl phosphate from ATP, ammonium and bicarbonate. Proceeds via a three-step mechanism, i.e. the phosphorylation of hydrogencarbonate to carboxyphosphate, a nucleophilic attack of ammonia on carboxyphosphate yielding carbamate, and the phosphorylation of carbamate forming carbamoyl phosphate. In M.smithii, the predominant archaeon in the human gut, one function of this enzyme may be to sequester ammonia, a scarce nutrient in the intestine which is the major source of nitrogen in M.smithii for the biosynthesis of nucleotides, amino acids, and many other metabolites. In Methanobrevibacter smithii (strain ATCC 35061 / DSM 861 / OCM 144 / PS), this protein is Carbamoyl-phosphate synthase.